The primary structure comprises 755 residues: MSSRDASLTPLKAVVIDDPPLRQTPEPFDEQSAYNPQSPIAIDFGSSKLRAGFVNHATPTHIFPNALTKFRDRKLNKNFTFVGNDTLLDQAVRSQSRSPFDGPFVTNWNLTEEILDYTFHHLGVVPDNGIPNPILLTERLATVQSQRTNWYQILFETYNVPGVTFGIDSLFSFYNYNPSGNKTGLVISCGHEDTNVIPVVDGAGILTDAKRINWGGHQAVDYLNDLMALKYPYFPTKMSYLQYETMYKDYCYVSRNYDEDIEKILTLENLDTNDVVVEAPFTEVLQPQKTEEELRIQAEKRKETGKRLQEQARLKRMEKLVQKQEEFEYFSKVRDQLIDEPKKKVLSVLQNAGFDDERDFKKYLHSLEQSLKKAQMVEAEDDSHLDEMNEDKTAQKFDLLDIADEDLNEDQIKEKRKQRFLKASQDARQKAKEEKERVAKEEEEKKLKEQQWRETDLNGWIKDKRLKLNKLIKRRKEKLKLRDEMKDRKSQVSQNRMKNLASLAEDNVKQGAKRNRHQATIDNDPNDTFGANDEDWLIYTDITQNPEAFEEALEYEYKDIVELERLLLEHDPNFTEEDTLEAQYDWRNSILHLFLRGPRPHDSENIHEQHQMHLNVERIRVPEVIFQPTMGGQDQAGICELSETILLKKFGSQPGKLSQTSIDMVNNVLITGGNAKVPGLKERIVKEFTGFLPTGTNITVNMSSDPSLDAWKGMAALARNEEQYRKTVISKKEYEEYGPEYIKEHKLGNTKYFED.

A Phosphoserine modification is found at Ser-7. A Glycyl lysine isopeptide (Lys-Gly) (interchain with G-Cter in ubiquitin) cross-link involves residue Lys-12. Thr-24 carries the post-translational modification Phosphothreonine. The residue at position 383 (Ser-383) is a Phosphoserine. The disordered stretch occupies residues 418–444 (QRFLKASQDARQKAKEEKERVAKEEEE). Basic and acidic residues predominate over residues 425–444 (QDARQKAKEEKERVAKEEEE).

This sequence belongs to the actin family. Component of the chromatin-remodeling INO80 complex, at least composed of ARP4, ARP5, ARP8, RVB1, RVB2, TAF14, NHP10, IES1, IES3, IES4, IES6, ACT1, IES2, IES5 and INO80.

The protein resides in the nucleus. In terms of biological role, probably involved in transcription regulation via its interaction with the INO80 complex, a chromatin remodeling complex. The polypeptide is Actin-related protein 5 (ARP5) (Saccharomyces cerevisiae (strain ATCC 204508 / S288c) (Baker's yeast)).